Consider the following 495-residue polypeptide: ATP synthase subunit beta (495 aa).

178–185 (GGAGVGKT) contacts ATP.

The protein belongs to the ATPase alpha/beta chains family. In terms of assembly, F-type ATPases have 2 components, CF(1) - the catalytic core - and CF(0) - the membrane proton channel. CF(1) has five subunits: alpha(3), beta(3), gamma(1), delta(1), epsilon(1). CF(0) has three main subunits: a(1), b(2) and c(9-12). The alpha and beta chains form an alternating ring which encloses part of the gamma chain. CF(1) is attached to CF(0) by a central stalk formed by the gamma and epsilon chains, while a peripheral stalk is formed by the delta and b chains.

The protein resides in the cell membrane. It carries out the reaction ATP + H2O + 4 H(+)(in) = ADP + phosphate + 5 H(+)(out). Its function is as follows. Produces ATP from ADP in the presence of a proton gradient across the membrane. The catalytic sites are hosted primarily by the beta subunits. The protein is ATP synthase subunit beta of Bifidobacterium animalis subsp. lactis (strain AD011).